The sequence spans 160 residues: Putative pre-16S rRNA nuclease (160 aa).

This sequence belongs to the YqgF nuclease family.

Its subcellular location is the cytoplasm. Could be a nuclease involved in processing of the 5'-end of pre-16S rRNA. The protein is Putative pre-16S rRNA nuclease of Jannaschia sp. (strain CCS1).